The following is a 314-amino-acid chain: Bifunctional pinoresinol-lariciresinol reductase 3 (314 aa).

NADP(+) is bound by residues 11 to 17 (GGTGFIG), Arg-36, and Lys-45. Lys-138 functions as the Proton acceptor in the catalytic mechanism. Arg-142 is an NADP(+) binding site. His-272 contacts substrate.

This sequence belongs to the NmrA-type oxidoreductase family. Isoflavone reductase subfamily. Dimer.

It carries out the reaction (-)-lariciresinol + NADP(+) = (-)-pinoresinol + NADPH + H(+). The catalysed reaction is (+)-secoisolariciresinol + NADP(+) = (-)-lariciresinol + NADPH + H(+). Its function is as follows. Reductase involved in lignan biosynthesis. Catalyzes the enantioselective sequential conversion of (-)-pinoresinol into (-)-lariciresinol and of (-)-lariciresinol into (+)-secoisolariciresinol. Abstracts the 4R-hydride from the NADPH cofactor during catalysis. This Thuja plicata (Western red-cedar) protein is Bifunctional pinoresinol-lariciresinol reductase 3.